Consider the following 156-residue polypeptide: Endoribonuclease YbeY (156 aa).

Positions 122, 126, and 132 each coordinate Zn(2+).

Belongs to the endoribonuclease YbeY family. It depends on Zn(2+) as a cofactor.

It is found in the cytoplasm. Functionally, single strand-specific metallo-endoribonuclease involved in late-stage 70S ribosome quality control and in maturation of the 3' terminus of the 16S rRNA. This Moorella thermoacetica (strain ATCC 39073 / JCM 9320) protein is Endoribonuclease YbeY.